Here is a 320-residue protein sequence, read N- to C-terminus: Peroxidase 66 (320 aa).

The signal sequence occupies residues 1 to 29 (MAASVSASCLNRLSSLAVVLVALASAASA). Gln-30 carries the post-translational modification Pyrrolidone carboxylic acid. 4 disulfides stabilise this stretch: Cys-40–Cys-118, Cys-73–Cys-78, Cys-124–Cys-315, and Cys-202–Cys-227. Residue His-71 is the Proton acceptor of the active site. Asp-72, Val-75, Gly-77, Asp-79, and Ser-81 together coordinate Ca(2+). Asn-85 and Asn-96 each carry an N-linked (GlcNAc...) asparagine glycan. Pro-165 serves as a coordination point for substrate. His-195 is a heme b binding site. Thr-196 provides a ligand contact to Ca(2+). N-linked (GlcNAc...) asparagine glycosylation is present at Asn-211. Residues Asp-239, Thr-242, and Asp-247 each contribute to the Ca(2+) site.

Belongs to the peroxidase family. Classical plant (class III) peroxidase subfamily. Heme b is required as a cofactor. Requires Ca(2+) as cofactor.

Its subcellular location is the secreted. It catalyses the reaction 2 a phenolic donor + H2O2 = 2 a phenolic radical donor + 2 H2O. Its function is as follows. Removal of H(2)O(2), oxidation of toxic reductants, biosynthesis and degradation of lignin, suberization, auxin catabolism, response to environmental stresses such as wounding, pathogen attack and oxidative stress. These functions might be dependent on each isozyme/isoform in each plant tissue. In Zea mays (Maize), this protein is Peroxidase 66 (PER66).